Here is a 186-residue protein sequence, read N- to C-terminus: Interferon beta-2 (186 aa).

Residues 1–21 (MTHRCLLQMVLLLCFSTTALS) form the signal peptide. Cysteines 52 and 161 form a disulfide. N-linked (GlcNAc...) asparagine glycosylation is found at N131 and N173.

Belongs to the alpha/beta interferon family. In terms of assembly, monomer.

Its subcellular location is the secreted. Its function is as follows. Has antiviral, antibacterial and anticancer activities. In Bos taurus (Bovine), this protein is Interferon beta-2 (IFNB2).